Consider the following 185-residue polypeptide: Celestoxin (185 aa).

Residues 1 to 20 (MKFIAAVLLVALLCPKDSTS) form the signal peptide. The propeptide occupies 21-148 (LASRLSGLLG…GLPVALPVSV (128 aa)).

As to expression, expressed by the mandibular venom gland.

Its subcellular location is the secreted. Functionally, has a hypotensive activity. The sequence is that of Celestoxin from Caribicus warreni (Haitian giant galliwasp).